Consider the following 210-residue polypeptide: T-cell surface glycoprotein CD8 beta chain (210 aa).

The N-terminal stretch at Met-1 to Val-21 is a signal peptide. The region spanning Leu-22 to Leu-132 is the Ig-like V-type domain. Residues Leu-22 to Leu-170 lie on the Extracellular side of the membrane. Cys-41 and Cys-116 are oxidised to a cystine. Asn-102 carries N-linked (GlcNAc...) asparagine glycosylation. A disordered region spans residues Pro-139–Val-161. The chain crosses the membrane as a helical span at residues Leu-171–Ile-191. Topologically, residues His-192 to Lys-210 are cytoplasmic.

Forms disulfide-linked heterodimers with CD8A at the cell surface. Interacts with CD3D; this interaction couples TCR-CD3 with CD8. Interacts with LCK. Phosphorylated as a consequence of T-cell activation. In terms of processing, palmitoylated at the cytoplasmic tail and thereby targets the heterodimer CD8A/CD8B to lipid rafts unlike CD8A homodimers.

The protein localises to the cell membrane. In terms of biological role, integral membrane glycoprotein that plays an essential role in the immune response and serves multiple functions in responses against both external and internal offenses. In T-cells, functions primarily as a coreceptor for MHC class I molecule:peptide complex. The antigens presented by class I peptides are derived from cytosolic proteins while class II derived from extracellular proteins. Interacts simultaneously with the T-cell receptor (TCR) and the MHC class I proteins presented by antigen presenting cells (APCs). In turn, recruits the Src kinase LCK to the vicinity of the TCR-CD3 complex. A palmitoylation site in the cytoplasmic tail of CD8B chain contributes to partitioning of CD8 into the plasma membrane lipid rafts where signaling proteins are enriched. Once LCK recruited, it initiates different intracellular signaling pathways by phosphorylating various substrates ultimately leading to lymphokine production, motility, adhesion and activation of cytotoxic T-lymphocytes (CTLs). Additionally, plays a critical role in thymic selection of CD8+ T-cells. The sequence is that of T-cell surface glycoprotein CD8 beta chain (CD8B) from Felis catus (Cat).